We begin with the raw amino-acid sequence, 527 residues long: Benzoate--CoA ligase (527 aa).

It belongs to the ATP-dependent AMP-binding enzyme family. Benzoate-CoA ligase subfamily. Monomer.

The catalysed reaction is benzoate + ATP + CoA = benzoyl-CoA + AMP + diphosphate. Catalyzes the ligation of benzoate and CoA to form benzoyl-CoA at the expense of ATP. The enzyme also ligates 2-aminobenzoate and CoA. The enzyme shows activity toward a number of benzoate derivatives. The polypeptide is Benzoate--CoA ligase (bclA) (Thauera aromatica).